The following is a 176-amino-acid chain: MDFKQYSPEELKECSMIEVVHSVLGDKRQATTFNELVQEIAQVLGLSQEQVNAKIAQFYTDLNIDGRFINLGENRWGLRSWYPYEQIDEEILPQPKPKKKRKVEDDGFDDYIEEDEDFDDADVTEDEDDDVEDLDKVLEDEDGDDDDLDDLDEDDDDFAEEELEYDETEEEEEEEL.

The 68-residue stretch at C14–W81 folds into the HTH HARE-type domain. Positions E90–L176 are disordered. Acidic residues predominate over residues D106–L176.

The protein belongs to the RpoE family. RNAP is composed of a core of 2 alpha, a beta and a beta' subunits. The core is associated with a delta subunit and one of several sigma factors.

In terms of biological role, participates in both the initiation and recycling phases of transcription. In the presence of the delta subunit, RNAP displays an increased specificity of transcription, a decreased affinity for nucleic acids, and an increased efficiency of RNA synthesis because of enhanced recycling. This chain is Probable DNA-directed RNA polymerase subunit delta, found in Bacillus thuringiensis subsp. konkukian (strain 97-27).